Reading from the N-terminus, the 574-residue chain is Craniofacial development protein 2 (574 aa).

Basic and acidic residues-rich tracts occupy residues 1–16 (MEEV…KAED), 23–37 (ECHE…KEDE), 45–55 (EQTKGIKRKAE), 86–111 (SEKE…KEDE), and 134–172 (TGEE…DRQQ). Disordered stretches follow at residues 1–222 (MEEV…PAVD) and 488–574 (TRPF…SGVF). Over residues 199 to 208 (KTGTNASSKN) the composition is skewed to polar residues. A hydrophilic region spans residues 493-572 (GTNEADDTSE…AVPSLPAGSG (80 aa)). The segment covering 502–516 (EESKPSSEQKGKEKP) has biased composition (basic and acidic residues). A compositionally biased stretch (low complexity) spans 518-528 (ASVPSAVSSVP).

It localises to the cytoplasm. It is found in the nucleus. This chain is Craniofacial development protein 2 (CFDP2), found in Tragulus javanicus (Lesser Malay chevrotain).